The chain runs to 277 residues: Adenylate kinase (277 aa).

53–58 provides a ligand contact to ATP; that stretch reads GAGKGT. Residues 73 to 102 form an NMP region; sequence ATGDMLRAQVAAKTPLGREAKKIMDAGGLV. AMP contacts are provided by residues T74, R79, 100–102, 129–132, and Q136; these read GLV and GFPR. The tract at residues 170–207 is LID; it reads GRLVHPASGRSYHKIFNPPKAPMTDDATGEPLIQRSDD. Residues R171 and 180–181 each bind ATP; that span reads SY. 2 residues coordinate AMP: R204 and R215. Residue Q243 coordinates ATP.

The protein belongs to the adenylate kinase family. AK2 subfamily. Monomer.

The protein resides in the cytoplasm. The protein localises to the cytosol. It is found in the mitochondrion intermembrane space. It catalyses the reaction AMP + ATP = 2 ADP. Functionally, catalyzes the reversible transfer of the terminal phosphate group between ATP and AMP. Plays an important role in cellular energy homeostasis and in adenine nucleotide metabolism. Adenylate kinase activity is critical for regulation of the phosphate utilization and the AMP de novo biosynthesis pathways. The polypeptide is Adenylate kinase (Phaeosphaeria nodorum (strain SN15 / ATCC MYA-4574 / FGSC 10173) (Glume blotch fungus)).